A 359-amino-acid polypeptide reads, in one-letter code: Apelin receptor B (359 aa).

Over 1–36 (MNAMDNMTADYSPDYFDDAVNSSMCEYDEWEPSYSL) the chain is Extracellular. 2 N-linked (GlcNAc...) asparagine glycosylation sites follow: asparagine 6 and asparagine 21. 2 disulfide bridges follow: cysteine 25–cysteine 288 and cysteine 107–cysteine 186. A helical transmembrane segment spans residues 37-57 (IPVLYMLIFILGLTGNGVVIF). Residues 58 to 75 (TVWRAQSKRRAADVYIGN) are Cytoplasmic-facing. The helical transmembrane segment at 76-96 (LALADLTFVVTLPLWAVYTAL) threads the bilayer. Residues 97-108 (GYHWPFGVALCK) are Extracellular-facing. A helical transmembrane segment spans residues 109-129 (ISSYVVLLNMYASVFCLTCLS). The Cytoplasmic segment spans residues 130–151 (LDRYMAIVHSLTSTQLRTRGHM). The chain crosses the membrane as a helical span at residues 152–172 (RASLTAIWLLSGVLAAPTLLF). The Extracellular segment spans residues 173–213 (RTTVYDVETNRTSCAMDFNLVVSQPGQETYWIAGLSISSTA). Asparagine 182 carries an N-linked (GlcNAc...) asparagine glycan. A helical transmembrane segment spans residues 214-234 (LGFLIPLLAMMVCYGFIGCTV). At 235–251 (TRHFNSLRKEDQRKRRL) the chain is on the cytoplasmic side. A helical transmembrane segment spans residues 252–272 (LKIITTLVVVFAACWMPFHVV). The Extracellular segment spans residues 273–286 (KTMDALSYLNLAPD). Residues 287-307 (SCTFLNLLLLAHPYATCLAYV) form a helical membrane-spanning segment. Topologically, residues 308–359 (NSCLNPLLYAFFDLRFRSQCLCLLNLKKALHASPASSLSSQKTEAQSLATKV) are cytoplasmic.

This sequence belongs to the G-protein coupled receptor 1 family. Mesendodermal expression at the blastoderm margin appears by 4.5 hpf. At early gastrulation, expression is maintained ventrolaterally while expression in dorsal cells and random deep cells declines. During gastrulation and segmentation, expression is maintained in adaxial, intermediate, and lateral plate mesoderm. During late segmentation, expressed in several regions including the forming heart. By 24 hpf, expressed in the dorsal aorta, caudal vein, and intersomitic blood vessels.

It is found in the cell membrane. G protein-coupled receptor for peptide hormones apelin (apln) and apelin receptor early endogenous ligand (apela), that plays a role in the regulation of normal cardiovascular function and fluid homeostasis. When acting as apelin receptor, activates both G(i) protein pathway that inhibits adenylate cyclase activity, and the beta-arrestin pathway that promotes internalization of the receptor. Also functions as mechanoreceptor that is activated by pathological stimuli in a G-protein-independent fashion to induce beta-arrestin signaling, hence eliciting cardiac hypertrophy. However, the presence of apelin ligand blunts cardiac hypertrophic induction from APLNR/APJ on response to pathological stimuli. Plays a key role in early development such as gastrulation, blood vessels formation and heart morphogenesis by acting as a receptor for apela hormone, promoting endoderm and mesendoderm cell migration and regulating the migration of cells fated to become myocardial progenitors, respectively. Positively regulates angioblast migration toward the embryonic midline, i.e. the position of the future vessel formation, during vasculogenesis. May promote sinus venosus (SV)-derived endothelial cells migration into the developing heart to promote coronary blood vessel development. Required for cardiovascular development, particularly for intersomitic vein angiogenesis by acting as a receptor for apln hormone. Plays a role in various processes in adults such as regulation of blood vessel formation, blood pressure, heart contractility and heart failure. Acts redundantly with agtrl1a in heart development. Its function is as follows. G protein-coupled receptor for peptide hormones apelin (APLN) and apelin receptor early endogenous ligand (APELA/ELA), that plays a role in the regulation of normal cardiovascular function and fluid homeostasis. When acting as apelin receptor, activates both G(i) protein pathway that inhibits adenylate cyclase activity, and the beta-arrestin pathway that promotes internalization of the receptor. APLNR/APJ also functions as mechanoreceptor that is activated by pathological stimuli in a G-protein-independent fashion to induce beta-arrestin signaling, hence eliciting cardiac hypertrophy. Plays a key role in early development such as gastrulation, blood vessels formation and heart morphogenesis by acting as a APELA receptor. May promote angioblast migration toward the embryonic midline, i.e. the position of the future vessel formation, during vasculogenesis. Promotes sinus venosus (SV)-derived endothelial cells migration into the developing heart to promote coronary blood vessel development. Also plays a role in various processes in adults such as regulation of blood vessel formation, blood pressure, heart contractility and heart failure. This chain is Apelin receptor B (aplnrb), found in Danio rerio (Zebrafish).